The primary structure comprises 297 residues: Acetyl-coenzyme A carboxylase carboxyl transferase subunit beta (297 aa).

A CoA carboxyltransferase N-terminal domain is found at 25–294; it reads LWVKCPETGQ…VPPKGRLPAP (270 aa).

This sequence belongs to the AccD/PCCB family. In terms of assembly, acetyl-CoA carboxylase is a heterohexamer composed of biotin carboxyl carrier protein (AccB), biotin carboxylase (AccC) and two subunits each of ACCase subunit alpha (AccA) and ACCase subunit beta (AccD).

The protein resides in the cytoplasm. It carries out the reaction N(6)-carboxybiotinyl-L-lysyl-[protein] + acetyl-CoA = N(6)-biotinyl-L-lysyl-[protein] + malonyl-CoA. The protein operates within lipid metabolism; malonyl-CoA biosynthesis; malonyl-CoA from acetyl-CoA: step 1/1. Component of the acetyl coenzyme A carboxylase (ACC) complex. Biotin carboxylase (BC) catalyzes the carboxylation of biotin on its carrier protein (BCCP) and then the CO(2) group is transferred by the transcarboxylase to acetyl-CoA to form malonyl-CoA. This Azorhizobium caulinodans (strain ATCC 43989 / DSM 5975 / JCM 20966 / LMG 6465 / NBRC 14845 / NCIMB 13405 / ORS 571) protein is Acetyl-coenzyme A carboxylase carboxyl transferase subunit beta.